Here is a 452-residue protein sequence, read N- to C-terminus: Enolase (452 aa).

Gln-167 lines the (2R)-2-phosphoglycerate pocket. Glu-209 acts as the Proton donor in catalysis. Mg(2+) is bound by residues Asp-250, Glu-310, and Asp-337. (2R)-2-phosphoglycerate is bound by residues Lys-362, Arg-391, Ser-392, and Lys-413. The active-site Proton acceptor is Lys-362.

The protein belongs to the enolase family. It depends on Mg(2+) as a cofactor.

Its subcellular location is the cytoplasm. It is found in the secreted. The protein localises to the cell surface. It catalyses the reaction (2R)-2-phosphoglycerate = phosphoenolpyruvate + H2O. It participates in carbohydrate degradation; glycolysis; pyruvate from D-glyceraldehyde 3-phosphate: step 4/5. Functionally, catalyzes the reversible conversion of 2-phosphoglycerate (2-PG) into phosphoenolpyruvate (PEP). It is essential for the degradation of carbohydrates via glycolysis. The polypeptide is Enolase (Mycoplasmopsis synoviae (strain 53) (Mycoplasma synoviae)).